Here is a 352-residue protein sequence, read N- to C-terminus: MEPDIKSISSESMEGVSDFSPSSWEHGGYLDKVEPEIDENGSMIPKYKIYTPGANERKYNNYMYLICYGFVEDVERTPETGKRKKIRTIAAYPLGVGKSASHPQDLLEELCSLKVTVRRTAGSTEKIVFGSSGPLNHLVPWKKVLTSGSIFNAVKVCRNVDQIQLDKHQALRIFFLSITKLNDSGIYMIPRTMLEFRRNNAIAFNLLVYLKIDADLSKMGIQGSLDKDGFKVASFMLHLGNFVRRAGKYYSVDYCRRKIDRMKLQFSLGSIGGLSLHIKINGVISKRLFAQMGFQKNLCFSLMDINPWLNRLTWNNSCEISRVAAVLQPSIPREFMIYDDVFIDNTGRILKG.

The tract at residues M1–S22 is disordered. Residues L106 to V115 carry the Nuclear export signal 1 motif. The Nuclear localization signal signature appears at R244–K258. The Nuclear export signal 2 motif lies at L268 to L276.

The protein belongs to the morbillivirus/respirovirus/rubulavirus M protein family. In terms of assembly, homomultimer. Interacts with host TRIM6; this interaction inhibits the IKBKE-dependent activation of the type I interferon signaling pathway. Interacts with host ANP32B; this interaction promotes M nuclear localization. Post-translationally, ubiquitinated; regulates matrix nuclear export.

The protein localises to the virion. It localises to the host cytoplasm. Its subcellular location is the host cell membrane. The protein resides in the host nucleus. Functionally, plays a crucial role in virion assembly and budding. Forms a shell at the inner face of the plasma membrane. Transits through the host nucleus before gaining the functional ability to localize and bud from the plasma membrane. Mediates together with fusion protein the incorporation of the glycoprotein to the viral particles. Also participates in the inhibition of the host interferon type I antiviral response by interacting with and thereby inhibiting host TRIM6. This is Matrix protein (M) from Cynopterus brachyotis (Lesser short-nosed fruit bat).